Here is a 427-residue protein sequence, read N- to C-terminus: ATP-sensitive inward rectifier potassium channel 12 (427 aa).

Over 1–77 (MTAASRANPY…LADMFTTCVD (77 aa)) the chain is Cytoplasmic. An S-nitrosocysteine modification is found at Cys75. Residues 78-104 (IRWRYMLLIFSLAFLASWLLFGIIFWV) form a helical membrane-spanning segment. The a 1,2-diacyl-sn-glycero-3-phospho-(1D-myo-inositol-4,5-bisphosphate) site is built by Arg79 and Arg81. Topologically, residues 105 to 129 (IAVAHGDLEPAEGRGRTPCVLQVHG) are extracellular. Cys123 and Cys155 form a disulfide bridge. Residues 130 to 146 (FMAAFLFSIETQTTIGY) constitute an intramembrane region (helical; Pore-forming). K(+)-binding residues include Thr143, Ile144, Gly145, and Tyr146. The Selectivity filter signature appears at 143-148 (TIGYGL). The Extracellular segment spans residues 147–155 (GLRCVTEEC). A helical transmembrane segment spans residues 156–183 (PVAVFMVVAQSIVGCIIDSFMIGAIMAK). A 1,2-diacyl-sn-glycero-3-phospho-(1D-myo-inositol-4,5-bisphosphate)-binding residues include Lys183 and Lys188. The Cytoplasmic portion of the chain corresponds to 184 to 427 (MGRPKKRAQT…ERPYRRESEI (244 aa)). The tract at residues 387–427 (DEEDEVATDRDGRSPQPEHDFDRLQASSGALERPYRRESEI) is disordered. The segment covering 393-409 (ATDRDGRSPQPEHDFDR) has biased composition (basic and acidic residues). The PDZ-binding motif lies at 425–427 (SEI).

This sequence belongs to the inward rectifier-type potassium channel (TC 1.A.2.1) family. KCNJ12 subfamily. Homotetramer. Forms heteromer with KCNJ4. Can form heteromeric channels with Kir2.6/KCNJ18. Association, via its PDZ-recognition domain, with LIN7A, LIN7B, LIN7C, DLG1, CASK and APBA1 plays a key role in its localization and trafficking. In terms of tissue distribution, highest level in cerebellum. Moderately found in kidney, forebrain and skeletal muscle. Not detected in uterus, liver and pancreas.

The protein localises to the membrane. The protein resides in the cell membrane. It localises to the sarcolemma. It is found in the T-tubule. The catalysed reaction is K(+)(in) = K(+)(out). With respect to regulation, activated by phosphatidylinositol 4,5-biphosphate (PtdIns(4,5)P2). PtdIns(4,5)P2 binding to the cytoplasmic side of the channel triggers a conformation change leading to channel opening. Inhibited by Ba(2+). Inward rectifying potassium channel that probably participates in controlling the resting membrane potential in electrically excitable cells. It probably participates in establishing action potential waveform and excitability of neuronal and muscle tissues. Inward rectifier potassium channels are characterized by a greater tendency to allow potassium to flow into the cell rather than out of it. Their voltage dependence is regulated by the concentration of extracellular potassium; as external potassium is raised, the voltage range of the channel opening shifts to more positive voltages. The inward rectification is mainly due to the blockage of outward current by internal magnesium. The chain is ATP-sensitive inward rectifier potassium channel 12 (Kcnj12) from Rattus norvegicus (Rat).